The chain runs to 640 residues: Threonine--tRNA ligase (640 aa).

In terms of domain architecture, TGS spans 1 to 61 (MPTITLPDGS…ERDASLQIIT (61 aa)). Residues 242–533 (DHRRIGKQLD…LIEHYAGAFP (292 aa)) form a catalytic region. Zn(2+) contacts are provided by C333, H384, and H510.

The protein belongs to the class-II aminoacyl-tRNA synthetase family. In terms of assembly, homodimer. Requires Zn(2+) as cofactor.

It is found in the cytoplasm. The enzyme catalyses tRNA(Thr) + L-threonine + ATP = L-threonyl-tRNA(Thr) + AMP + diphosphate + H(+). Catalyzes the attachment of threonine to tRNA(Thr) in a two-step reaction: L-threonine is first activated by ATP to form Thr-AMP and then transferred to the acceptor end of tRNA(Thr). Also edits incorrectly charged L-seryl-tRNA(Thr). This chain is Threonine--tRNA ligase, found in Stutzerimonas stutzeri (strain A1501) (Pseudomonas stutzeri).